The primary structure comprises 246 residues: Apolipoprotein L domain-containing protein 1 (246 aa).

The next 2 helical transmembrane spans lie at 50 to 72 and 89 to 109; these read SLAA…IVGL and GLGV…SLIF. The stretch at 193–220 forms a coiled coil; that stretch reads LKAKIQKLSESLESCTGALDELSEQLES.

It belongs to the apolipoprotein L family. Present at low levels in brain vascular cells (at protein level).

The protein localises to the cell membrane. It localises to the cell junction. Its subcellular location is the cytoplasmic vesicle. It is found in the secretory vesicle. In terms of biological role, is a modulator of endothelial barrier permeability, required for proper organization of endothelial cell-cell junctions and cytoskeleton. It also plays a role in the modulation of secretory autophagy. May affect blood-brain barrier permeability. The polypeptide is Apolipoprotein L domain-containing protein 1 (Apold1) (Rattus norvegicus (Rat)).